The following is a 118-amino-acid chain: Basic phospholipase A2 PA-12A (118 aa).

7 disulfide bridges follow: Cys-11/Cys-71, Cys-27/Cys-117, Cys-29/Cys-45, Cys-44/Cys-98, Cys-51/Cys-91, Cys-60/Cys-84, and Cys-78/Cys-89. Ca(2+)-binding residues include Tyr-28, Gly-30, and Gly-32. The active site involves His-48. A Ca(2+)-binding site is contributed by Asp-49. Asp-92 is an active-site residue.

This sequence belongs to the phospholipase A2 family. Group I subfamily. D49 sub-subfamily. Ca(2+) serves as cofactor. Expressed by the venom gland.

Its subcellular location is the secreted. The catalysed reaction is a 1,2-diacyl-sn-glycero-3-phosphocholine + H2O = a 1-acyl-sn-glycero-3-phosphocholine + a fatty acid + H(+). In terms of biological role, PLA2 catalyzes the calcium-dependent hydrolysis of the 2-acyl groups in 3-sn-phosphoglycerides. The chain is Basic phospholipase A2 PA-12A from Pseudechis australis (Mulga snake).